Reading from the N-terminus, the 150-residue chain is MEETLPSYEAASGAANLQEVKPQVLPLEEIKKIYKISYWWLCSIALIQTWWVLLGLLPIFFALEHYEVPYKWIFIIEMLYYELYLTLYVCWCYKLRSDFWNEAAKNRPNEERLSALGGWDFLRIPKKRVLVLRDAQSEKKQNNADASNLV.

The sequence is that of Meiotic expression up-regulated protein 15 (meu15) from Schizosaccharomyces pombe (strain 972 / ATCC 24843) (Fission yeast).